A 67-amino-acid chain; its full sequence is Probable Sec-independent protein translocase protein TatE (67 aa).

A helical transmembrane segment spans residues 4–21; that stretch reads ISITKLLVIAALVVLLFG.

This sequence belongs to the TatA/E family. TatE subfamily.

Its subcellular location is the cell inner membrane. In terms of biological role, part of the twin-arginine translocation (Tat) system that transports large folded proteins containing a characteristic twin-arginine motif in their signal peptide across membranes. TatE shares overlapping functions with TatA. The protein is Probable Sec-independent protein translocase protein TatE of Citrobacter rodentium (strain ICC168) (Citrobacter freundii biotype 4280).